A 604-amino-acid chain; its full sequence is Proline--tRNA ligase (604 aa).

It belongs to the class-II aminoacyl-tRNA synthetase family. ProS type 1 subfamily. As to quaternary structure, homodimer.

It localises to the cytoplasm. The catalysed reaction is tRNA(Pro) + L-proline + ATP = L-prolyl-tRNA(Pro) + AMP + diphosphate. Functionally, catalyzes the attachment of proline to tRNA(Pro) in a two-step reaction: proline is first activated by ATP to form Pro-AMP and then transferred to the acceptor end of tRNA(Pro). As ProRS can inadvertently accommodate and process non-cognate amino acids such as alanine and cysteine, to avoid such errors it has two additional distinct editing activities against alanine. One activity is designated as 'pretransfer' editing and involves the tRNA(Pro)-independent hydrolysis of activated Ala-AMP. The other activity is designated 'posttransfer' editing and involves deacylation of mischarged Ala-tRNA(Pro). The misacylated Cys-tRNA(Pro) is not edited by ProRS. This Nostoc punctiforme (strain ATCC 29133 / PCC 73102) protein is Proline--tRNA ligase.